Here is a 233-residue protein sequence, read N- to C-terminus: Small ribosomal subunit protein uS2 (233 aa).

This sequence belongs to the universal ribosomal protein uS2 family.

In Bacillus cytotoxicus (strain DSM 22905 / CIP 110041 / 391-98 / NVH 391-98), this protein is Small ribosomal subunit protein uS2.